The primary structure comprises 333 residues: MQSSVNEFLTPRHIDVQVVSPTRAKITLEPLERGFGHTLGNALRRILLSSMPGCAVVEAEIDGVLHEYSAIEGVQEDVIEILLNLKGIAIKLHGRDEVTLSLVKKGAGAVTAADIQLDHDVEIVNGDHLIANLAANGSLNMKLKVARGRGYEPADARQSDEDESRSIGRLQLDATFSPVRRVAYVVENARVEQRTNLDKLVIDLETNGTLDPEEAIRRAATILQQQLAAFVDLKGDSEPVVVEQEDEIDPILLRPVDDLELTVRSANCLKAENIYYIGDLIQRTEVELLKTPNLGKKSLTEIKDVLASRGLSLGMRLDNWPPASLKKDDKATA.

The alpha N-terminal domain (alpha-NTD) stretch occupies residues 1 to 234; it reads MQSSVNEFLT…QQLAAFVDLK (234 aa). Residues 248–333 form an alpha C-terminal domain (alpha-CTD) region; the sequence is IDPILLRPVD…SLKKDDKATA (86 aa).

This sequence belongs to the RNA polymerase alpha chain family. In terms of assembly, homodimer. The RNAP catalytic core consists of 2 alpha, 1 beta, 1 beta' and 1 omega subunit. When a sigma factor is associated with the core the holoenzyme is formed, which can initiate transcription.

It catalyses the reaction RNA(n) + a ribonucleoside 5'-triphosphate = RNA(n+1) + diphosphate. In terms of biological role, DNA-dependent RNA polymerase catalyzes the transcription of DNA into RNA using the four ribonucleoside triphosphates as substrates. This is DNA-directed RNA polymerase subunit alpha from Stutzerimonas stutzeri (strain A1501) (Pseudomonas stutzeri).